The primary structure comprises 312 residues: Olfactory receptor 1D2 (312 aa).

Topologically, residues 1 to 25 (MDGGNQSEGSEFLLLGMSESPEQQQ) are extracellular. Asparagine 5 is a glycosylation site (N-linked (GlcNAc...) asparagine). The helical transmembrane segment at 26–49 (ILFWMFLSMYLVTVVGNVLIILAI) threads the bilayer. The Cytoplasmic segment spans residues 50–57 (NSDSHLHT). Residues 58 to 79 (PMYFFLANLSFTDLFFVTNTIP) traverse the membrane as a helical segment. Residues 80–100 (KMLVNLQSQNKAISYAGCLTQ) lie on the Extracellular side of the membrane. A disulfide bridge links cysteine 97 with cysteine 189. The helical transmembrane segment at 101-120 (LYFLVSLVALDNLILAVMAY) threads the bilayer. At 121–139 (DRYVAICCPLHYTTAMSPK) the chain is on the cytoplasmic side. Residues 140-158 (LCILLLSLCWVLSVLYGLI) traverse the membrane as a helical segment. Residues 159–196 (HTILMTRVTFCGSRKIHYIFCEMYVLLRMACSNIQINH) are Extracellular-facing. Asparagine 195 carries N-linked (GlcNAc...) asparagine glycosylation. Residues 197–219 (TVLIATGCFIFLIPFGFVIISYV) form a helical membrane-spanning segment. Residues 220-236 (LIIRAILRIPSVSKKYK) are Cytoplasmic-facing. The chain crosses the membrane as a helical span at residues 237–259 (AFSTCASHLGAVSLFYGTLCMVY). Residues 260 to 271 (LKPLHTFSVKDS) lie on the Extracellular side of the membrane. Residues 272-291 (VATVMYAVVTPMMNPFIYSL) traverse the membrane as a helical segment. The Cytoplasmic segment spans residues 292–312 (RNKDMHGALGRLLDTHFKRLT).

This sequence belongs to the G-protein coupled receptor 1 family.

It is found in the cell membrane. Functionally, odorant receptor. The chain is Olfactory receptor 1D2 (OR1D2) from Gorilla gorilla gorilla (Western lowland gorilla).